A 148-amino-acid chain; its full sequence is Angiogenin-1 (148 aa).

The first 23 residues, 1–23, serve as a signal peptide directing secretion; that stretch reads MVMVLSPLLLVFILGLGLTPVAP. H37 serves as the catalytic Proton acceptor. Position 45 (R45) interacts with tRNA. Cystine bridges form between C50–C105, C63–C116, and C81–C131. Residues 55-59 carry the Nucleolar localization signal motif; the sequence is KNRRL. TRNA is bound by residues C105 and I127. Residue H138 is the Proton donor of the active site.

This sequence belongs to the pancreatic ribonuclease family. Homodimer. Interacts with RNH1; inhibiting ANG ribonuclease activity. Serum and milk.

Its subcellular location is the secreted. The protein resides in the nucleus. It localises to the nucleolus. The protein localises to the cytoplasm. It is found in the stress granule. In terms of biological role, secreted ribonuclease that can either promote or restrict cell proliferation of target cells, depending on the context. Endocytosed in target cells via its receptor PLXNB2 and translocates to the cytoplasm or nucleus. Under stress conditions, localizes to the cytoplasm and promotes the assembly of stress granules (SGs): specifically cleaves a subset of tRNAs within anticodon loops to produce tRNA-derived stress-induced fragments (tiRNAs), resulting in translation repression and inhibition of cell proliferation. tiRNas also prevent formation of apoptosome, thereby promoting cell survival. Preferentially cleaves RNAs between a pyrimidine and an adenosine residue, suggesting that it cleaves the anticodon loop of tRNA(Ala) (32-UUAGCAU-38) after positions 33 and 36. Cleaves a subset of tRNAs, including tRNA(Ala), tRNA(Glu), tRNA(Gly), tRNA(Lys), tRNA(Val), tRNA(His), tRNA(Asp) and tRNA(Sec). Under growth conditions and in differentiated cells, translocates to the nucleus and stimulates ribosomal RNA (rRNA) transcription, including that containing the initiation site sequences of 45S rRNA, thereby promoting cell growth and proliferation. Angiogenin induces vascularization of normal and malignant tissues via its ability to promote rRNA transcription. The sequence is that of Angiogenin-1 (ANG1) from Bos taurus (Bovine).